Reading from the N-terminus, the 341-residue chain is MEHAAPLAVPLGQAEVFQALQRLHMTIFSQSVSPCGKFLAAGNNYGQIAIFSLSAALSSEAKEESKKPVVVFHAHDGPVYSMVSTDRHLLSAGDGEVKGWLWAEILKKGCKELWRRQPPYRTSLEVPEINALLLVPKENSLILAGGDCQLHSMDLETGAFTRALRGHTDYIHCLALRERSPEVLSGGEDGAVRLWDLRIAKEVQTIEVYKHEECSRPHNGRWIGCLATDSDWMVCGGGPALTLWHLRSSTPTTVFPIRAPQKHVTFYQDLILSAGQGCCVNHWQLSGELKAQVPGSSPGLLSLSLNQQPAAPECKVLTASGNSCRVDVFTNLGYRAFSLSF.

WD repeat units lie at residues 22-61 (RLHM…SSEA), 74-112 (AHDG…GCKE), 124-165 (LEVP…RALR), 166-205 (GHTD…EVQT), 215-254 (SRPH…PTTV), 256-293 (PIRA…KAQV), and 295-339 (GSSP…AFSL). Ser180 bears the Phosphoserine mark.

This sequence belongs to the WD repeat THOC6 family. In terms of assembly, component of the THO subcomplex, which is composed of THOC1, THOC2, THOC3, THOC5, THOC6 and THOC7. The THO subcomplex interacts with DDX39B to form the THO-DDX39B complex which multimerizes into a 28-subunit tetrameric assembly. Component of the transcription/export (TREX) complex at least composed of ALYREF/THOC4, DDX39B, SARNP/CIP29, CHTOP and the THO subcomplex; in the complex interacts with THOC5; together with THOC5 and THOC7, plays a key structural role in the oligomerization of the THO-DDX39B complex. TREX seems to have a dynamic structure involving ATP-dependent remodeling.

The protein resides in the nucleus. Its subcellular location is the nucleus speckle. Functionally, component of the THO subcomplex of the TREX complex which is thought to couple mRNA transcription, processing and nuclear export, and which specifically associates with spliced mRNA and not with unspliced pre-mRNA. Plays a key structural role in the oligomerization of the THO-DDX39B complex. TREX is recruited to spliced mRNAs by a transcription-independent mechanism, binds to mRNA upstream of the exon-junction complex (EJC) and is recruited in a splicing- and cap-dependent manner to a region near the 5' end of the mRNA where it functions in mRNA export to the cytoplasm via the TAP/NXF1 pathway. Plays a role in apoptosis negative control involved in brain development. This is THO complex subunit 6 homolog (Thoc6) from Mus musculus (Mouse).